Here is a 333-residue protein sequence, read N- to C-terminus: UDP-3-O-acylglucosamine N-acyltransferase 2 (333 aa).

The Proton acceptor role is filled by histidine 243.

This sequence belongs to the transferase hexapeptide repeat family. LpxD subfamily. In terms of assembly, homotrimer.

The enzyme catalyses a UDP-3-O-[(3R)-3-hydroxyacyl]-alpha-D-glucosamine + a (3R)-hydroxyacyl-[ACP] = a UDP-2-N,3-O-bis[(3R)-3-hydroxyacyl]-alpha-D-glucosamine + holo-[ACP] + H(+). It participates in bacterial outer membrane biogenesis; LPS lipid A biosynthesis. Catalyzes the N-acylation of UDP-3-O-acylglucosamine using 3-hydroxyacyl-ACP as the acyl donor. Is involved in the biosynthesis of lipid A, a phosphorylated glycolipid that anchors the lipopolysaccharide to the outer membrane of the cell. The chain is UDP-3-O-acylglucosamine N-acyltransferase 2 from Koribacter versatilis (strain Ellin345).